The primary structure comprises 282 residues: NADPH-dependent 7-cyano-7-deazaguanine reductase (282 aa).

88 to 90 (IES) is a binding site for substrate. Residue 90–91 (SK) coordinates NADPH. The active-site Thioimide intermediate is cysteine 190. Aspartate 197 acts as the Proton donor in catalysis. 229 to 230 (HE) lines the substrate pocket. Residue 258 to 259 (RG) participates in NADPH binding.

This sequence belongs to the GTP cyclohydrolase I family. QueF type 2 subfamily. In terms of assembly, homodimer.

It localises to the cytoplasm. It carries out the reaction 7-aminomethyl-7-carbaguanine + 2 NADP(+) = 7-cyano-7-deazaguanine + 2 NADPH + 3 H(+). Its pathway is tRNA modification; tRNA-queuosine biosynthesis. In terms of biological role, catalyzes the NADPH-dependent reduction of 7-cyano-7-deazaguanine (preQ0) to 7-aminomethyl-7-deazaguanine (preQ1). This Escherichia coli O127:H6 (strain E2348/69 / EPEC) protein is NADPH-dependent 7-cyano-7-deazaguanine reductase.